The following is a 133-amino-acid chain: Capsid protein (133 aa).

Belongs to the Leviviricetes capsid protein family. Homodimer. The capsid protein dimer binds to the viral RNA via an operator hairpin, but also many other RNA sequences in the viral genome.

It is found in the virion. In terms of biological role, capsid protein self-assembles to form an icosahedral capsid with a T=3 symmetry, about 26 nm in diameter, and consisting of 89 capsid proteins dimers (178 capsid proteins). Involved in viral genome encapsidation through the interaction between a capsid protein dimer and the multiple packaging signals present in the RNA genome. Binding of the capsid proteins to the viral RNA induces a conformational change required for efficient T=3 shell formation. The capsid also contains 1 copy of the A2 maturation protein. Its function is as follows. Acts as a translational repressor of viral replicase synthesis late in infection. This latter function is the result of capsid protein interaction with an RNA hairpin which contains the replicase ribosome-binding site. In Escherichia coli, this protein is Capsid protein.